A 322-amino-acid chain; its full sequence is NADH-cytochrome b5 reductase 2 (322 aa).

A helical membrane pass occupies residues 31 to 48 (LAPIYAAVGITGVGVGLY). In terms of domain architecture, FAD-binding FR-type spans 72-176 (QGWFDLKLSE…KGPIVKYPWE (105 aa)). 179-214 (KHNHICLIAGGTGITPMYQLAREIFKNPEDQTKVTL) is an FAD binding site.

The protein belongs to the flavoprotein pyridine nucleotide cytochrome reductase family. The cofactor is FAD.

It is found in the mitochondrion outer membrane. The catalysed reaction is 2 Fe(III)-[cytochrome b5] + NADH = 2 Fe(II)-[cytochrome b5] + NAD(+) + H(+). May mediate the reduction of outer membrane cytochrome b5. This chain is NADH-cytochrome b5 reductase 2 (mcr1), found in Aspergillus niger (strain ATCC MYA-4892 / CBS 513.88 / FGSC A1513).